A 553-amino-acid polypeptide reads, in one-letter code: Probable bifunctional riboflavin biosynthesis protein RIBA 2, chloroplastic (553 aa).

The transit peptide at Met1–Ala56 directs the protein to the chloroplast. The interval Asp62–Lys336 is DHBP synthase. The disordered stretch occupies residues Tyr70–Pro90. Positions Gly72–Arg85 are enriched in polar residues. Residues Arg160 to Glu161, Asp165, Arg275 to Thr279, and Glu299 contribute to the D-ribulose 5-phosphate site. Residue Glu161 participates in Mg(2+) binding. His278 serves as a coordination point for Mg(2+). The interval Arg337–His553 is GTP cyclohydrolase II. Arg387–Glu391 lines the GTP pocket. Zn(2+) is bound by residues Cys392, Cys403, and Cys405. Residues Gln408, Glu431–Arg433, and Thr453 each bind GTP. Asp465 (proton acceptor; for GTP cyclohydrolase activity) is an active-site residue. Residue Arg467 is the Nucleophile; for GTP cyclohydrolase activity of the active site. 2 residues coordinate GTP: Thr488 and Lys493.

In the N-terminal section; belongs to the DHBP synthase family. It in the C-terminal section; belongs to the GTP cyclohydrolase II family. Mg(2+) serves as cofactor. It depends on Mn(2+) as a cofactor. Zn(2+) is required as a cofactor.

It is found in the plastid. It localises to the chloroplast. The catalysed reaction is D-ribulose 5-phosphate = (2S)-2-hydroxy-3-oxobutyl phosphate + formate + H(+). The enzyme catalyses GTP + 4 H2O = 2,5-diamino-6-hydroxy-4-(5-phosphoribosylamino)-pyrimidine + formate + 2 phosphate + 3 H(+). Its pathway is cofactor biosynthesis; riboflavin biosynthesis; 2-hydroxy-3-oxobutyl phosphate from D-ribulose 5-phosphate: step 1/1. The protein operates within cofactor biosynthesis; riboflavin biosynthesis; 5-amino-6-(D-ribitylamino)uracil from GTP: step 1/4. In terms of biological role, involved in riboflavin biosynthesis. Catalyzes both the conversion of D-ribulose 5-phosphate to formate and 3,4-dihydroxy-2-butanone 4-phosphate and the conversion of GTP to 2,5-diamino-6-ribosylamino-4(3H)-pyrimidinone 5'-phosphate (DARP), formate and pyrophosphate. The sequence is that of Probable bifunctional riboflavin biosynthesis protein RIBA 2, chloroplastic (RIBA2) from Oryza sativa subsp. japonica (Rice).